The sequence spans 109 residues: Red pigment-concentrating prohormone (109 aa).

Positions 1–25 (MVRRSGVTLLVVALLVVTLMSSVSA) are cleaved as a signal peptide. Q26 bears the Pyrrolidone carboxylic acid mark. At W33 the chain carries Tryptophan amide. Residues 34-78 (GKRAAGASGSNGGVGEAVSGLHPSVGGAPGGVVPPGSSSPGDSCG) are disordered. Low complexity-rich tracts occupy residues 49-59 (EAVSGLHPSVG) and 67-78 (PPGSSSPGDSCG).

This sequence belongs to the AKH/HRTH/RPCH family.

The protein localises to the secreted. Its function is as follows. This hormone adapts the animal to light backgrounds by stimulating concentration of the pigment of its red body-chromatophores. This Callinectes sapidus (Blue crab) protein is Red pigment-concentrating prohormone.